We begin with the raw amino-acid sequence, 277 residues long: Probable ABC transporter permease protein y4oR (277 aa).

The next 7 helical transmembrane spans lie at 15–35, 79–99, 109–129, 140–160, 189–209, 213–233, and 242–262; these read LWTL…TWMV, VVTI…AYAL, LLVA…VPVY, TYQA…IWLM, IMMP…FIAV, FLFA…AMLG, and WDAV…FAFI. Residues 74–263 form the ABC transmembrane type-1 domain; the sequence is IINSAVVTIV…TPVIAFAFIM (190 aa).

The protein belongs to the binding-protein-dependent transport system permease family. MalFG subfamily.

Its subcellular location is the cell inner membrane. In terms of biological role, probably part of the binding-protein-dependent transport system y4oPQRS. This system probably transports a sugar-like molecule. Probably responsible for the translocation of the substrate across the membrane. The chain is Probable ABC transporter permease protein y4oR from Sinorhizobium fredii (strain NBRC 101917 / NGR234).